The sequence spans 128 residues: Ribonuclease P protein component (128 aa).

This sequence belongs to the RnpA family. Consists of a catalytic RNA component (M1 or rnpB) and a protein subunit.

The enzyme catalyses Endonucleolytic cleavage of RNA, removing 5'-extranucleotides from tRNA precursor.. In terms of biological role, RNaseP catalyzes the removal of the 5'-leader sequence from pre-tRNA to produce the mature 5'-terminus. It can also cleave other RNA substrates such as 4.5S RNA. The protein component plays an auxiliary but essential role in vivo by binding to the 5'-leader sequence and broadening the substrate specificity of the ribozyme. This Prochlorococcus marinus (strain MIT 9313) protein is Ribonuclease P protein component.